The following is a 424-amino-acid chain: Serine--tRNA ligase (424 aa).

Residue 231–233 (TAE) participates in L-serine binding. Residue 262–264 (RSE) participates in ATP binding. L-serine is bound at residue Glu-285. Residue 349–352 (EISS) participates in ATP binding. Residue Ser-385 coordinates L-serine.

This sequence belongs to the class-II aminoacyl-tRNA synthetase family. Type-1 seryl-tRNA synthetase subfamily. In terms of assembly, homodimer. The tRNA molecule binds across the dimer.

It localises to the cytoplasm. It catalyses the reaction tRNA(Ser) + L-serine + ATP = L-seryl-tRNA(Ser) + AMP + diphosphate + H(+). The enzyme catalyses tRNA(Sec) + L-serine + ATP = L-seryl-tRNA(Sec) + AMP + diphosphate + H(+). It participates in aminoacyl-tRNA biosynthesis; selenocysteinyl-tRNA(Sec) biosynthesis; L-seryl-tRNA(Sec) from L-serine and tRNA(Sec): step 1/1. In terms of biological role, catalyzes the attachment of serine to tRNA(Ser). Is also able to aminoacylate tRNA(Sec) with serine, to form the misacylated tRNA L-seryl-tRNA(Sec), which will be further converted into selenocysteinyl-tRNA(Sec). The protein is Serine--tRNA ligase of Bacillus cereus (strain ZK / E33L).